The following is a 256-amino-acid chain: Phosphonates import ATP-binding protein PhnC (256 aa).

An ABC transporter domain is found at 3 to 247 (LELKNISKTY…VLHKEIFTNV (245 aa)). Position 36–43 (36–43 (GLSGAGKS)) interacts with ATP.

Belongs to the ABC transporter superfamily. Phosphonates importer (TC 3.A.1.9.1) family. The complex is composed of two ATP-binding proteins (PhnC), two transmembrane proteins (PhnE) and a solute-binding protein (PhnD).

The protein resides in the cell inner membrane. It carries out the reaction phosphonate(out) + ATP + H2O = phosphonate(in) + ADP + phosphate + H(+). Part of the ABC transporter complex PhnCDE involved in phosphonates import. Responsible for energy coupling to the transport system. The protein is Phosphonates import ATP-binding protein PhnC of Treponema denticola (strain ATCC 35405 / DSM 14222 / CIP 103919 / JCM 8153 / KCTC 15104).